A 266-amino-acid polypeptide reads, in one-letter code: Probable metal transport system membrane protein TP_0036 (266 aa).

The next 8 membrane-spanning stretches (helical) occupy residues 10–30 (AFVASFLIALLCPLVGMHLVL), 34–54 (ALMGDALAHGSLAGVSIAVSC), 56–76 (IHPGWGSFFFTALVGVLIEFL), 88–108 (LSIVLSLSVGIAVTLLSSGLI), 120–140 (ILVVSTRDLWIMLALSVFCVG), 172–192 (VASVVISATIAASIKITGILV), 211–231 (FLLTLVAAFLFSMLDTALGLV), and 238–258 (VAPGGFTALVSVVVLMLVIAL).

This sequence belongs to the ABC-3 integral membrane protein family.

The protein localises to the cell inner membrane. In terms of biological role, part of an ATP-driven transport system TP_0034/TP_0035/TP_0036 for a metal. This Treponema pallidum (strain Nichols) protein is Probable metal transport system membrane protein TP_0036.